Consider the following 948-residue polypeptide: Phosphatidylinositol-glycan-specific phospholipase D (948 aa).

A signal peptide spans 1-24; the sequence is MKNKIILLWLLLIVILCTISNVKG. Residues Asn39, Asn78, Asn148, Asn300, Asn433, Asn452, Asn506, and Asn535 are each glycosylated (N-linked (GlcNAc...) asparagine). FG-GAP repeat units follow at residues 451–512, 526–588, 596–656, and 663–724; these read TNFT…SVTI, QVAT…NPAG, LPSI…RISG, and DADY…LNSF. 2 N-linked (GlcNAc...) asparagine glycosylation sites follow: Asn749 and Asn788. FG-GAP repeat units lie at residues 799–861 and 895–948; these read NLLL…LTND and SSGG…NIFQ.

The protein belongs to the GPLD1 family. Ca(2+) serves as cofactor.

It localises to the secreted. It catalyses the reaction a 6-(alpha-D-glucosaminyl)-1-(1,2-diacyl-sn-glycero-3-phospho)-1D-myo-inositol + H2O = 6-(alpha-D-glucosaminyl)-1D-myo-inositol + a 1,2-diacyl-sn-glycero-3-phosphate + H(+). Hydrolyzes the inositol phosphate linkage in proteins anchored by phosphatidylinositol glycans (GPI-anchor) thus releasing these proteins from the membrane. May also cleave GPI anchor intermediates intracellularly. This Dictyostelium discoideum (Social amoeba) protein is Phosphatidylinositol-glycan-specific phospholipase D (pldG).